The sequence spans 312 residues: Secreted RxLR effector protein 14 (312 aa).

Residues 1–20 (MHSFKLLLALIVAICTSCDA) form the signal peptide. Positions 46–61 (RLLRAKDGKVRADEER) match the RxLR-dEER motif.

Belongs to the RxLR effector family.

The protein resides in the secreted. The protein localises to the host nucleus. In terms of biological role, secreted effector that completely suppresses the host cell death induced by cell death-inducing proteins. This is Secreted RxLR effector protein 14 from Plasmopara viticola (Downy mildew of grapevine).